The sequence spans 541 residues: Arginine--tRNA ligase (541 aa).

The 'HIGH' region signature appears at 119–129 (ANPTGPLHIGH).

Belongs to the class-I aminoacyl-tRNA synthetase family. Monomer.

The protein localises to the cytoplasm. The enzyme catalyses tRNA(Arg) + L-arginine + ATP = L-arginyl-tRNA(Arg) + AMP + diphosphate. This is Arginine--tRNA ligase from Helicobacter pylori (strain P12).